The following is a 194-amino-acid chain: Peptidyl-tRNA hydrolase (194 aa).

Y17 serves as a coordination point for tRNA. The active-site Proton acceptor is the H22. TRNA contacts are provided by Y69, N71, and N117.

The protein belongs to the PTH family. Monomer.

Its subcellular location is the cytoplasm. The catalysed reaction is an N-acyl-L-alpha-aminoacyl-tRNA + H2O = an N-acyl-L-amino acid + a tRNA + H(+). Hydrolyzes ribosome-free peptidyl-tRNAs (with 1 or more amino acids incorporated), which drop off the ribosome during protein synthesis, or as a result of ribosome stalling. Its function is as follows. Catalyzes the release of premature peptidyl moieties from peptidyl-tRNA molecules trapped in stalled 50S ribosomal subunits, and thus maintains levels of free tRNAs and 50S ribosomes. In Arthrobacter sp. (strain FB24), this protein is Peptidyl-tRNA hydrolase.